We begin with the raw amino-acid sequence, 712 residues long: Sesterterpene synthase btcA (712 aa).

The segment at 1–332 (MTTIWEHCVD…CANCPRHHAW (332 aa)) is terpene cyclase. Asp96 is a binding site for Mg(2+). Substrate contacts are provided by residues Asp96, Asn234, 238-242 (SWDRE), and 328-329 (RH). Residues 96–100 (DDLCD) carry the DDXXD 1 motif. An NSE/DTE motif is present at residues 234 to 242 (NDYWSWDRE). Positions 333–706 (RDEESSPSER…VMRIVLSRLS (374 aa)) are prenyltransferase. A disordered region spans residues 334-373 (DEESSPSERSFSPSNEGIEDPRLSPGASTTSSMSQKSSPA). 2 stretches are compositionally biased toward low complexity: residues 340 to 349 (SERSFSPSNE) and 361 to 373 (STTSSMSQKSSPA). Positions 414, 417, and 446 each coordinate isopentenyl diphosphate. Asp453 and Asp457 together coordinate Mg(2+). The DDXXD 2 motif lies at 453 to 457 (DDIED). Arg462 contacts dimethylallyl diphosphate. Arg463 provides a ligand contact to isopentenyl diphosphate. Lys540, Thr541, Gln580, Asn587, Lys597, and Lys607 together coordinate dimethylallyl diphosphate.

The protein in the N-terminal section; belongs to the terpene synthase family. It in the C-terminal section; belongs to the FPP/GGPP synthase family. As to quaternary structure, hexamer. Mg(2+) serves as cofactor.

The enzyme catalyses isopentenyl diphosphate + (2E,6E)-farnesyl diphosphate = (2E,6E,10E)-geranylgeranyl diphosphate + diphosphate. It carries out the reaction isopentenyl diphosphate + (2E,6E,10E)-geranylgeranyl diphosphate = (2E,6E,10E,14E)-geranylfarnesyl diphosphate + diphosphate. Its pathway is secondary metabolite biosynthesis; terpenoid biosynthesis. Bifunctional terpene synthase; part of the gene cluster that mediates the biosynthesis of betaestacins. The bifunctional terpene synthase btcA converts isopentenyl diphosphate (IPP) and dimethylallyl diphosphate (DMAPP) into the sesterterpene betaestacin I. The C-terminal prenyltransferase (PT) domain of btcA catalyzes formation of GFPP, whereas the N-terminal terpene cyclase (TC) domain catalyzes the cyclization of GFPP into betaestacin I. The cytochrome P450 monooxygenase btcB oxidizes the C25 methyl group of betaestacin I to yield the carboxylic acid betaestacin IV via the alcohol betaestacin III. The cytochrome P450 monooxygenase btcC further catalyzes the multistep oxidation of betaestacin IV to produce several compounds, including betaestacins Va, Vb, Vc and VI. The sequence is that of Sesterterpene synthase btcA from Colletotrichum orbiculare (strain 104-T / ATCC 96160 / CBS 514.97 / LARS 414 / MAFF 240422) (Cucumber anthracnose fungus).